Here is a 156-residue protein sequence, read N- to C-terminus: 6,7-dimethyl-8-ribityllumazine synthase (156 aa).

Residues phenylalanine 25, 59–61, and 83–85 contribute to the 5-amino-6-(D-ribitylamino)uracil site; these read AWE and AVI. Position 88-89 (88-89) interacts with (2S)-2-hydroxy-3-oxobutyl phosphate; the sequence is ST. The active-site Proton donor is histidine 91. Asparagine 116 contacts 5-amino-6-(D-ribitylamino)uracil. A (2S)-2-hydroxy-3-oxobutyl phosphate-binding site is contributed by arginine 130.

The protein belongs to the DMRL synthase family. Forms an icosahedral capsid composed of 60 subunits, arranged as a dodecamer of pentamers.

It carries out the reaction (2S)-2-hydroxy-3-oxobutyl phosphate + 5-amino-6-(D-ribitylamino)uracil = 6,7-dimethyl-8-(1-D-ribityl)lumazine + phosphate + 2 H2O + H(+). It functions in the pathway cofactor biosynthesis; riboflavin biosynthesis; riboflavin from 2-hydroxy-3-oxobutyl phosphate and 5-amino-6-(D-ribitylamino)uracil: step 1/2. Functionally, catalyzes the formation of 6,7-dimethyl-8-ribityllumazine by condensation of 5-amino-6-(D-ribitylamino)uracil with 3,4-dihydroxy-2-butanone 4-phosphate. This is the penultimate step in the biosynthesis of riboflavin. This chain is 6,7-dimethyl-8-ribityllumazine synthase, found in Acinetobacter baumannii (strain AB0057).